The sequence spans 29 residues: Sarcolamban B (29 aa).

The chain crosses the membrane as a helical span at residues 7–27 (LFTTFLILAFLLFLLYAFYEA).

As to quaternary structure, interacts with SERCA. In terms of tissue distribution, strongly expressed in embryonic and larval somatic muscles and postembryonic heart.

The protein resides in the sarcoplasmic reticulum membrane. Its function is as follows. Plays an essential role in the regulation of calcium transport at the sarcoplasmic reticulum (SR), which is secondarily required for regular muscle contraction. In Drosophila melanogaster (Fruit fly), this protein is Sarcolamban B.